The sequence spans 451 residues: UDP-N-acetylmuramoylalanine--D-glutamate ligase (451 aa).

ATP is bound at residue 119–125 (GSNGKTT).

This sequence belongs to the MurCDEF family.

It is found in the cytoplasm. The catalysed reaction is UDP-N-acetyl-alpha-D-muramoyl-L-alanine + D-glutamate + ATP = UDP-N-acetyl-alpha-D-muramoyl-L-alanyl-D-glutamate + ADP + phosphate + H(+). It participates in cell wall biogenesis; peptidoglycan biosynthesis. Functionally, cell wall formation. Catalyzes the addition of glutamate to the nucleotide precursor UDP-N-acetylmuramoyl-L-alanine (UMA). The sequence is that of UDP-N-acetylmuramoylalanine--D-glutamate ligase from Bacillus cytotoxicus (strain DSM 22905 / CIP 110041 / 391-98 / NVH 391-98).